Reading from the N-terminus, the 878-residue chain is Phosphoenolpyruvate carboxylase (878 aa).

Residues His-138 and Lys-544 contribute to the active site.

Belongs to the PEPCase type 1 family. It depends on Mg(2+) as a cofactor.

The enzyme catalyses oxaloacetate + phosphate = phosphoenolpyruvate + hydrogencarbonate. Forms oxaloacetate, a four-carbon dicarboxylic acid source for the tricarboxylic acid cycle. This Psychromonas ingrahamii (strain DSM 17664 / CCUG 51855 / 37) protein is Phosphoenolpyruvate carboxylase.